Reading from the N-terminus, the 523-residue chain is Probable 3-ketoacyl-CoA synthase 20 (523 aa).

2 helical membrane passes run 31-55 and 78-96; these read IVAVTALVAAAPRLSTLLAAAAAGG and ALAVACWAAALAAYTYAAS. The 290-residue stretch at 93–382 folds into the FAE domain; sequence YAASRPRPVY…RFLATVVLKR (290 aa). Residues cysteine 237, histidine 317, histidine 401, histidine 405, and asparagine 438 contribute to the active site.

The protein belongs to the thiolase-like superfamily. Chalcone/stilbene synthases family. In terms of tissue distribution, highly expressed in leaf sheaths. Expressed in leaves, flag leaves and panicles.

The protein localises to the membrane. It catalyses the reaction a very-long-chain acyl-CoA + malonyl-CoA + H(+) = a very-long-chain 3-oxoacyl-CoA + CO2 + CoA. Its function is as follows. Contributes to fatty acids elongation. Plays a role in controlling leaf anatomy and plant architecture. This chain is Probable 3-ketoacyl-CoA synthase 20, found in Oryza sativa subsp. japonica (Rice).